The sequence spans 140 residues: Transcription antitermination protein NusB (140 aa).

Belongs to the NusB family.

Functionally, involved in transcription antitermination. Required for transcription of ribosomal RNA (rRNA) genes. Binds specifically to the boxA antiterminator sequence of the ribosomal RNA (rrn) operons. This chain is Transcription antitermination protein NusB, found in Leptospira biflexa serovar Patoc (strain Patoc 1 / Ames).